Consider the following 328-residue polypeptide: MSGAESYRHITVLLNEAVDALAVREDGVYVDGTFGRGGHSRLILSRLGDAGRLIVFDKDPQAIAVAEELARSDKRVGVVHGGFASFQTALDGLGIGKVDGALFDLGISSPQIDDGSRGFSFRFDAPLDMRMDTTRGMSAAEWIAVASEQDLHEVIKNYGEERFSRRIARAIVAQRAESPIDTTRKLAQIVAQNVRTRERGQDPATRTFQAVRIFINRELEEVGAVLPQVMCRLKEGGRLAVIAFHSLEDRIVKQFVKKYSQHAPLPRWAAVREADLPELPLKIVGRALKPGEAEIAANPRARSAVLRVAERTAGPIPEQSQRKTSEWQ.

Residues 37 to 39 (GGH), Asp57, Phe83, Asp104, and Gln111 contribute to the S-adenosyl-L-methionine site.

Belongs to the methyltransferase superfamily. RsmH family.

Its subcellular location is the cytoplasm. It carries out the reaction cytidine(1402) in 16S rRNA + S-adenosyl-L-methionine = N(4)-methylcytidine(1402) in 16S rRNA + S-adenosyl-L-homocysteine + H(+). Functionally, specifically methylates the N4 position of cytidine in position 1402 (C1402) of 16S rRNA. The chain is Ribosomal RNA small subunit methyltransferase H from Neisseria meningitidis serogroup B (strain ATCC BAA-335 / MC58).